The sequence spans 89 residues: Small ribosomal subunit protein uS17 (89 aa).

Belongs to the universal ribosomal protein uS17 family. As to quaternary structure, part of the 30S ribosomal subunit.

Functionally, one of the primary rRNA binding proteins, it binds specifically to the 5'-end of 16S ribosomal RNA. This is Small ribosomal subunit protein uS17 from Ralstonia nicotianae (strain ATCC BAA-1114 / GMI1000) (Ralstonia solanacearum).